The following is a 260-amino-acid chain: Cytochrome c oxidase subunit 3 (260 aa).

Over 1 to 15 (MAHQAHAYHMVDPSP) the chain is Mitochondrial matrix. The helical transmembrane segment at 16-34 (WPLTGAVAALLLTSGLAMW) threads the bilayer. Residues 35-40 (FHFGSM) are Mitochondrial intermembrane-facing. A helical transmembrane segment spans residues 41–66 (ILLTLGLITMVLTMIQWWRDVIREGT). The Mitochondrial matrix portion of the chain corresponds to 67-72 (FQGHHT). A helical transmembrane segment spans residues 73-105 (PPVQKGLRYGMILFITSEVFFFIGFFWAFYNSS). Residues 106-128 (LAPTYELGECWPPTGITPLNPFE) are Mitochondrial intermembrane-facing. The chain crosses the membrane as a helical span at residues 129–152 (VPLLNTAVLLASGVTVTWAHHSIM). Topologically, residues 153–155 (HGD) are mitochondrial matrix. The helical transmembrane segment at 156 to 183 (RKEAIQSLTLTILLGLYFTALQAMEYYE) threads the bilayer. Residues 184-190 (APFTIAD) lie on the Mitochondrial intermembrane side of the membrane. Residues 191–223 (GVYGSTFFVATGFHGLHVIIGSLFLSVCLLRQI) form a helical membrane-spanning segment. Over 224–232 (QYHFTSKHH) the chain is Mitochondrial matrix. The helical transmembrane segment at 233 to 255 (FGFEAAWYWHFVDVVWLFLYVSI) threads the bilayer. The Mitochondrial intermembrane segment spans residues 256–260 (YWWGS).

Belongs to the cytochrome c oxidase subunit 3 family. Component of the cytochrome c oxidase (complex IV, CIV), a multisubunit enzyme composed of 14 subunits. The complex is composed of a catalytic core of 3 subunits MT-CO1, MT-CO2 and MT-CO3, encoded in the mitochondrial DNA, and 11 supernumerary subunits COX4I, COX5A, COX5B, COX6A, COX6B, COX6C, COX7A, COX7B, COX7C, COX8 and NDUFA4, which are encoded in the nuclear genome. The complex exists as a monomer or a dimer and forms supercomplexes (SCs) in the inner mitochondrial membrane with NADH-ubiquinone oxidoreductase (complex I, CI) and ubiquinol-cytochrome c oxidoreductase (cytochrome b-c1 complex, complex III, CIII), resulting in different assemblies (supercomplex SCI(1)III(2)IV(1) and megacomplex MCI(2)III(2)IV(2)).

Its subcellular location is the mitochondrion inner membrane. It carries out the reaction 4 Fe(II)-[cytochrome c] + O2 + 8 H(+)(in) = 4 Fe(III)-[cytochrome c] + 2 H2O + 4 H(+)(out). In terms of biological role, component of the cytochrome c oxidase, the last enzyme in the mitochondrial electron transport chain which drives oxidative phosphorylation. The respiratory chain contains 3 multisubunit complexes succinate dehydrogenase (complex II, CII), ubiquinol-cytochrome c oxidoreductase (cytochrome b-c1 complex, complex III, CIII) and cytochrome c oxidase (complex IV, CIV), that cooperate to transfer electrons derived from NADH and succinate to molecular oxygen, creating an electrochemical gradient over the inner membrane that drives transmembrane transport and the ATP synthase. Cytochrome c oxidase is the component of the respiratory chain that catalyzes the reduction of oxygen to water. Electrons originating from reduced cytochrome c in the intermembrane space (IMS) are transferred via the dinuclear copper A center (CU(A)) of subunit 2 and heme A of subunit 1 to the active site in subunit 1, a binuclear center (BNC) formed by heme A3 and copper B (CU(B)). The BNC reduces molecular oxygen to 2 water molecules using 4 electrons from cytochrome c in the IMS and 4 protons from the mitochondrial matrix. In Xenopus laevis (African clawed frog), this protein is Cytochrome c oxidase subunit 3 (mt-co3).